The primary structure comprises 361 residues: Probable purine permease 13 (361 aa).

Transmembrane regions (helical) follow at residues 35-55 (WILVFISIFFLISAQAIAVLL), 68-88 (WISTLVQTCGFPILYLPLCFL), 103-123 (LVWIYLSLGFAIGLDNLLYSF), 129-151 (SASTYSILCSSQLAFNGVFSYYI), 156-176 (ITCLILFSVLFLSVSAVLVSL), 192-212 (LIGCLCTVFASLIYSLQLSLM), 238-258 (VASCVAVIGLFASGEWMLLSV), 268-288 (VIYVLTLVGTAVSWQLGSVGA), 289-309 (VALIFLVSSLFSNLIGTLSLI), and 323-343 (LTEVKMVAMLIAFMGFGFYIY).

This sequence belongs to the purine permeases (TC 2.A.7.14) family.

It is found in the membrane. This chain is Probable purine permease 13 (PUP13), found in Arabidopsis thaliana (Mouse-ear cress).